A 310-amino-acid chain; its full sequence is Homoserine O-acetyltransferase (310 aa).

Residue cysteine 142 is the Acyl-thioester intermediate of the active site. Substrate contacts are provided by lysine 163 and serine 192. The active-site Proton acceptor is the histidine 235. Residue glutamate 237 is part of the active site. Residue arginine 249 participates in substrate binding.

The protein belongs to the MetA family.

Its subcellular location is the cytoplasm. The enzyme catalyses L-homoserine + acetyl-CoA = O-acetyl-L-homoserine + CoA. The protein operates within amino-acid biosynthesis; L-methionine biosynthesis via de novo pathway; O-acetyl-L-homoserine from L-homoserine: step 1/1. Its function is as follows. Transfers an acetyl group from acetyl-CoA to L-homoserine, forming acetyl-L-homoserine. In Parabacteroides distasonis (strain ATCC 8503 / DSM 20701 / CIP 104284 / JCM 5825 / NCTC 11152), this protein is Homoserine O-acetyltransferase.